A 355-amino-acid polypeptide reads, in one-letter code: NADH-quinone oxidoreductase subunit H (355 aa).

8 helical membrane-spanning segments follow: residues 25–45 (LVRI…LILW), 91–111 (WLYL…WAVI), 126–146 (LLYA…AGWA), 170–190 (MGFA…SEIV), 205–225 (FLSW…VSGI), 253–273 (MAFA…SALA), 290–310 (FIPG…VFIW), and 330–350 (VFLP…MSPL).

Belongs to the complex I subunit 1 family. As to quaternary structure, NDH-1 is composed of 14 different subunits. Subunits NuoA, H, J, K, L, M, N constitute the membrane sector of the complex.

The protein localises to the cell inner membrane. The enzyme catalyses a quinone + NADH + 5 H(+)(in) = a quinol + NAD(+) + 4 H(+)(out). Functionally, NDH-1 shuttles electrons from NADH, via FMN and iron-sulfur (Fe-S) centers, to quinones in the respiratory chain. The immediate electron acceptor for the enzyme in this species is believed to be ubiquinone. Couples the redox reaction to proton translocation (for every two electrons transferred, four hydrogen ions are translocated across the cytoplasmic membrane), and thus conserves the redox energy in a proton gradient. This subunit may bind ubiquinone. This Burkholderia vietnamiensis (strain G4 / LMG 22486) (Burkholderia cepacia (strain R1808)) protein is NADH-quinone oxidoreductase subunit H.